The chain runs to 527 residues: Glutamyl-tRNA reductase 1, chloroplastic (527 aa).

A chloroplast-targeting transit peptide spans 1–43 (MAGATSATAAAGAFAAAKARGPAAACPWLVAAGGRRRSGVVRC). Substrate contacts are provided by residues 124–127 (TCNR), serine 184, 189–191 (EGQ), and glutamine 195. Cysteine 125 (nucleophile) is an active-site residue. NADP(+) is bound at residue 266–271 (GAGKMG).

Belongs to the glutamyl-tRNA reductase family. As to quaternary structure, homodimer.

Its subcellular location is the plastid. The protein resides in the chloroplast. The catalysed reaction is (S)-4-amino-5-oxopentanoate + tRNA(Glu) + NADP(+) = L-glutamyl-tRNA(Glu) + NADPH + H(+). It functions in the pathway porphyrin-containing compound metabolism; protoporphyrin-IX biosynthesis; 5-aminolevulinate from L-glutamyl-tRNA(Glu): step 1/2. In terms of biological role, catalyzes the NADPH-dependent reduction of glutamyl-tRNA(Glu) to glutamate 1-semialdehyde (GSA). This is Glutamyl-tRNA reductase 1, chloroplastic (HEMA1) from Hordeum vulgare (Barley).